A 310-amino-acid chain; its full sequence is NAD-dependent protein deacylase sirtuin-5, mitochondrial (310 aa).

The N-terminal 36 residues, 1–36 (MQPLQIAPCRLLYGLYRGLKSPASTGTRICPAMARP), are a transit peptide targeting the mitochondrion. The 271-residue stretch at 37-307 (SSNMADFRKL…PEALAPHETG (271 aa)) folds into the Deacetylase sirtuin-type domain. 58-77 (GAGVSAESGVPTFRGAGGYW) serves as a coordination point for NAD(+). Substrate-binding residues include Y102 and R105. NAD(+) is bound at residue 140-143 (QNID). The active-site Proton acceptor is H158. Zn(2+) contacts are provided by C166, C169, C207, and C212. Residues 249 to 251 (GTS), 275 to 277 (NME), and C293 contribute to the NAD(+) site.

This sequence belongs to the sirtuin family. Class III subfamily. Monomer. Homodimer. Interacts with CPS1. Interacts with PCCA. Zn(2+) serves as cofactor.

Its subcellular location is the mitochondrion. It localises to the cytoplasm. It is found in the cytosol. The protein localises to the nucleus. The catalysed reaction is N(6)-malonyl-L-lysyl-[protein] + NAD(+) + H2O = 2''-O-malonyl-ADP-D-ribose + nicotinamide + L-lysyl-[protein]. The enzyme catalyses N(6)-succinyl-L-lysyl-[protein] + NAD(+) + H2O = 2''-O-succinyl-ADP-D-ribose + nicotinamide + L-lysyl-[protein]. It catalyses the reaction N(6)-glutaryl-L-lysyl-[protein] + NAD(+) + H2O = 2''-O-glutaryl-ADP-D-ribose + nicotinamide + L-lysyl-[protein]. Its function is as follows. NAD-dependent lysine demalonylase, desuccinylase and deglutarylase that specifically removes malonyl, succinyl and glutaryl groups on target proteins. Activates CPS1 and contributes to the regulation of blood ammonia levels during prolonged fasting: acts by mediating desuccinylation and deglutarylation of CPS1, thereby increasing CPS1 activity in response to elevated NAD levels during fasting. Activates SOD1 by mediating its desuccinylation, leading to reduced reactive oxygen species. Activates SHMT2 by mediating its desuccinylation. Modulates ketogenesis through the desuccinylation and activation of HMGCS2. Has weak NAD-dependent protein deacetylase activity; however this activity may not be physiologically relevant in vivo. Can deacetylate cytochrome c (CYCS) and a number of other proteins in vitro such as UOX. The sequence is that of NAD-dependent protein deacylase sirtuin-5, mitochondrial from Canis lupus familiaris (Dog).